A 247-amino-acid chain; its full sequence is 3(1)-hydroxy-L-isoleucine 4-dioxygenase (247 aa).

Residues His-160, Asp-162, and His-213 each coordinate Fe cation.

Belongs to the iron/ascorbate-dependent oxidoreductase family. Requires L-ascorbate as cofactor. The cofactor is Fe(2+).

The enzyme catalyses 3(1)-hydroxy-L-isoleucine + 2-oxoglutarate + O2 = (4S)-3(1),4-dihydroxy-L-isoleucine + succinate + CO2. Functionally, catalyzes the hydroxylation of L-4'-hydroxyisoleucine (4'-HIL) at the C-4 position to form L-4,4'-dihydroxyisoleucine (4,4'-DIHIL). Together with HilA, catalyzes the two step conversion of L-isoleucine into L-4,4'-dihydroxyisoleucine. In vitro, in the absence of HilA, can also catalyze the oxidation of L-methionine and the C-4-hydroxylation of L-leucine and L-isoleucine. The chain is 3(1)-hydroxy-L-isoleucine 4-dioxygenase from Pantoea ananatis (strain AJ13355).